Here is a 660-residue protein sequence, read N- to C-terminus: Solute carrier family 5 member 4 (660 aa).

Over 1–28 (MASTLSPSTVTKTPGPPEISERIQNAAD) the chain is Cytoplasmic. Residues 29–47 (ISVIVIYFVVVMAVGLWAM) form a helical membrane-spanning segment. The Extracellular portion of the chain corresponds to 48–64 (LRTNRGTVGGFFLAGRD). A helical membrane pass occupies residues 65–85 (VTWWPMGASLFASNIGSGHFV). Residues 86 to 105 (GLAGTGAASGIAIAAFEWNA) lie on the Cytoplasmic side of the membrane. A helical membrane pass occupies residues 106-126 (LLLLLVLGWFFVPIYIKAGVM). Residues 127–171 (TMPEYLRKRFGGKRLQIYLSILSLFICVALRISSDIFSGAIFIKL) lie on the Extracellular side of the membrane. The helical transmembrane segment at 172 to 191 (ALGLDLYLAIFSLLAITAIY) threads the bilayer. Residues 192–208 (TITGGLASVIYTDTLQT) lie on the Cytoplasmic side of the membrane. A helical membrane pass occupies residues 209–229 (IIMLIGSFILMGFAFVEVGGY). Residues 230–270 (ESFTEKYMNAIPTIVEGDNLTISPKCYTPQGDSFHIFRDAV) are Extracellular-facing. An N-linked (GlcNAc...) asparagine glycan is attached at asparagine 248. The helical transmembrane segment at 271-291 (TGDIPWPGMIFGMTVVAAWYW) threads the bilayer. The Cytoplasmic portion of the chain corresponds to 292-314 (CTDQVIVQRCLSGKDMSHVKAAC). Residues 315-334 (IMCGYLKLLPMFLMVMPGMI) traverse the membrane as a helical segment. At 335–423 (SRILYTEKVA…RKQASEKELL (89 aa)) the chain is on the extracellular side. Residues 424 to 443 (IAGRLFIILLIVISIVWVPL) form a helical membrane-spanning segment. Residues 444 to 455 (VQVAQNGQLFHY) lie on the Cytoplasmic side of the membrane. The chain crosses the membrane as a helical span at residues 456–476 (IESISSYLGPPIAAVFLLAIF). Over 477-526 (CKRVNEQGAFWGLIIGFVMGLIRMIAEFVYGTGSCLAASNCPQIICGVHY) the chain is Extracellular. Residues 527 to 547 (LYFALILFFVSILVVLAISLL) form a helical membrane-spanning segment. At 548 to 638 (TKPIPDVHLY…TDTSEKPLWK (91 aa)) the chain is on the cytoplasmic side. A helical transmembrane segment spans residues 639-659 (TIVNINAILLLAVAVFVHGYF).

The protein belongs to the sodium:solute symporter (SSF) (TC 2.A.21) family. In terms of tissue distribution, kidney, intestine, liver, skeletal muscle and spleen.

Its subcellular location is the cell membrane. It carries out the reaction D-glucose(out) + 2 Na(+)(out) = D-glucose(in) + 2 Na(+)(in). Its activity is regulated as follows. Inhibited by phlorizin. In terms of biological role, low-affinity sodium/D-glucose symporter with a great selectivity for sugars (D-glucose &gt;&gt; D-galactose). Na(+) and D-glucose transport are tightly coupled at neutral pH, but at acidic pH, ion transport is uncoupled from sugar transport. In Sus scrofa (Pig), this protein is Solute carrier family 5 member 4.